A 524-amino-acid chain; its full sequence is Phosphoenolpyruvate carboxykinase (ATP) (524 aa).

Arg-52, Tyr-188, and Lys-194 together coordinate substrate. ATP-binding positions include Lys-194, His-213, and 229-237; that span reads GLSGTGKTT. Mn(2+) contacts are provided by Lys-194 and His-213. Asp-250 is a binding site for Mn(2+). ATP-binding residues include Glu-278, Arg-314, and Thr-439. Residue Arg-314 coordinates substrate.

The protein belongs to the phosphoenolpyruvate carboxykinase (ATP) family. Requires Mn(2+) as cofactor.

The protein localises to the cytoplasm. It catalyses the reaction oxaloacetate + ATP = phosphoenolpyruvate + ADP + CO2. Its pathway is carbohydrate biosynthesis; gluconeogenesis. Its function is as follows. Involved in the gluconeogenesis. Catalyzes the conversion of oxaloacetate (OAA) to phosphoenolpyruvate (PEP) through direct phosphoryl transfer between the nucleoside triphosphate and OAA. This chain is Phosphoenolpyruvate carboxykinase (ATP), found in Campylobacter lari (strain RM2100 / D67 / ATCC BAA-1060).